Reading from the N-terminus, the 304-residue chain is Non-specific ribonucleoside hydrolase RihC (304 aa).

His233 is a catalytic residue.

It belongs to the IUNH family. RihC subfamily.

Hydrolyzes both purine and pyrimidine ribonucleosides with a broad-substrate specificity. This chain is Non-specific ribonucleoside hydrolase RihC, found in Shigella sonnei (strain Ss046).